Consider the following 44-residue polypeptide: Protein PsbN (44 aa).

The helical transmembrane segment at 6-26 (FFFTIFLWFFLLSITAYSIYV) threads the bilayer.

It belongs to the PsbN family.

The protein resides in the plastid. It localises to the chloroplast thylakoid membrane. Functionally, may play a role in photosystem I and II biogenesis. The polypeptide is Protein PsbN (Stigeoclonium helveticum (Green alga)).